Here is a 599-residue protein sequence, read N- to C-terminus: Beta-glucuronidase (599 aa).

D-glucuronate is bound by residues Asp-160 and Asn-407. Glu-408 functions as the Proton donor in the catalytic mechanism. D-glucuronate is bound by residues Asn-462, Tyr-468, Glu-501, Trp-546, and Lys-565. The Nucleophile role is filled by Glu-501. The short motif at 563–565 (NHK) is the N-K motif element.

It belongs to the glycosyl hydrolase 2 family.

The enzyme catalyses a beta-D-glucuronoside + H2O = D-glucuronate + an alcohol. With respect to regulation, inhibited by a set of synthetic compounds like thio-urea derivatives and analogs. Inhibitors of gut microbial beta-glucuronidases are expected to block the reactivation of glucuronidated cancer drugs, and to alleviate drug-induced GI toxicity. Its function is as follows. Displays beta-glucuronidase activity with the artificial substrate p-nitrophenyl-beta-D-glucuronide (PNPG). Is likely capable of scavenging glucuronate from a range of chemically distinct xenobiotic and endobiotic glucuronides present in the gastrointestinal (GI) tract, to be able to utilize these diverse sources of carbon. As part of the GI microbiome, this enzyme would be able to reactivate glucuronide drug conjugates, such reactivated compounds can significantly damage the GI tract. In Streptococcus agalactiae serotype V (strain ATCC BAA-611 / 2603 V/R), this protein is Beta-glucuronidase.